The primary structure comprises 379 residues: Beta-1,3-N-acetylglucosaminyltransferase lunatic fringe (379 aa).

The Cytoplasmic portion of the chain corresponds to 1–8 (MLKRCGRR). The helical; Signal-anchor for type II membrane protein transmembrane segment at 9-29 (LLLALAGALLACLLVLTADPP) threads the bilayer. The Lumenal segment spans residues 30 to 379 (PPPLPAERGR…TPWCPRTAIF (350 aa)). The tract at residues 86–107 (RDAGPPPGAAPRPADGHPRPLA) is disordered. R129 contacts substrate. N167 is a glycosylation site (N-linked (GlcNAc...) asparagine). Cystine bridges form between C168/C179 and C197/C260. D201 contributes to the substrate binding site. D202 is a binding site for Mn(2+). Residue D290 is part of the active site. H314 is a binding site for Mn(2+). C364 and C373 are disulfide-bonded.

The protein belongs to the glycosyltransferase 31 family. The cofactor is Mn(2+). It depends on Co(2+) as a cofactor. Post-translationally, a soluble form may be derived from the membrane form by proteolytic processing.

The protein resides in the golgi apparatus. It is found in the golgi apparatus membrane. It carries out the reaction 3-O-(alpha-L-fucosyl)-L-threonyl-[EGF-like domain protein] + UDP-N-acetyl-alpha-D-glucosamine = 3-O-(N-acetyl-beta-D-glucosaminyl-(1-&gt;3)-alpha-L-fucosyl)-L-threonyl-[EGF-like domain protein] + UDP + H(+). The catalysed reaction is 3-O-(alpha-L-fucosyl)-L-seryl-[EGF-like domain protein] + UDP-N-acetyl-alpha-D-glucosamine = 3-O-(N-acetyl-beta-D-glucosaminyl-(1-&gt;3)-alpha-L-fucosyl)-L-seryl-[EGF-like domain protein] + UDP + H(+). Its function is as follows. Glycosyltransferase that initiates the elongation of O-linked fucose residues attached to EGF-like repeats in the extracellular domain of Notch molecules. Modulates NOTCH1 activity by modifying O-fucose residues at specific EGF-like domains resulting in inhibition of NOTCH1 activation by JAG1 and enhancement of NOTCH1 activation by DLL1 via an increase in its binding to DLL1. Decreases the binding of JAG1 to NOTCH2 but not that of DLL1. Essential mediator of somite segmentation and patterning. The chain is Beta-1,3-N-acetylglucosaminyltransferase lunatic fringe from Homo sapiens (Human).